A 416-amino-acid polypeptide reads, in one-letter code: Lysosome-associated membrane glycoprotein 3 (416 aa).

The first 27 residues, 1–27, serve as a signal peptide directing secretion; the sequence is MPRQLSAAAVLFASLAVILHDGSQMRA. At 28-381 the chain is on the lumenal side; sequence KAFPKTRDYS…NVDECSSDYT (354 aa). Residues 135 to 217 are disordered; it reads PPTITPPAHT…ASTVPGSTLA (83 aa). Positions 142-170 are enriched in polar residues; it reads AHTTGTSSSTVNHTTGNATQPSNQTTLPA. The segment covering 188-208 has biased composition (low complexity); sequence PTHAPGTTAAAHNTTRTAAPA. Asn200 is a glycosylation site (N-linked (GlcNAc...) asparagine). Cys237 and Cys274 are disulfide-bonded. Asn291 is a glycosylation site (N-linked (GlcNAc...) asparagine). Cys339 and Cys376 are disulfide-bonded. A helical transmembrane segment spans residues 382-402; that stretch reads IVLPVIGAIVVGLCLVGMGVY. The Cytoplasmic portion of the chain corresponds to 403–416; sequence KIRLRCQSSGYQRI.

It belongs to the LAMP family. As to quaternary structure, monomer. Interacts with FURIN.

It is found in the cell surface. The protein localises to the lysosome membrane. It localises to the cytoplasmic vesicle membrane. Its subcellular location is the early endosome membrane. Its function is as follows. Lysosomal membrane glycoprotein which plays a role in the unfolded protein response (UPR) that contributes to protein degradation and cell survival during proteasomal dysfunction. Plays a role in the process of fusion of the lysosome with the autophagosome, thereby modulating the autophagic process. Promotes hepatocellular lipogenesis through activation of the PI3K/Akt pathway. May also play a role in dendritic cell function and in adaptive immunity. This Macaca mulatta (Rhesus macaque) protein is Lysosome-associated membrane glycoprotein 3 (LAMP3).